Reading from the N-terminus, the 452-residue chain is Protein EARLY-RESPONSIVE TO DEHYDRATION 7, chloroplastic (452 aa).

Polar residues predominate over residues 1–18 (MESSGDKQTSSLYPTVDT). A chloroplast-targeting transit peptide spans 1–28 (MESSGDKQTSSLYPTVDTSNPEAPINPS). Residues 1 to 37 (MESSGDKQTSSLYPTVDTSNPEAPINPSSSSSTNNLY) form a disordered region. Positions 19 to 37 (SNPEAPINPSSSSSTNNLY) are enriched in low complexity. One can recognise a Senescence domain in the interval 258–426 (IATGSGHLIK…AWVAFKIRKA (169 aa)).

The protein resides in the plastid. It localises to the chloroplast. In Arabidopsis thaliana (Mouse-ear cress), this protein is Protein EARLY-RESPONSIVE TO DEHYDRATION 7, chloroplastic.